We begin with the raw amino-acid sequence, 337 residues long: Cytoskeleton protein RodZ (337 aa).

Residues 1 to 111 (MNTEATHDQN…LGKRRKKRDG (111 aa)) are Cytoplasmic-facing. In terms of domain architecture, HTH cro/C1-type spans 19–71 (LRNAREQLGLSQQAVAERLCLKVSTVRDIEEDKAPADLASTFLRGYIRSYARL). Residues 30–49 (QQAVAERLCLKVSTVRDIEE) constitute a DNA-binding region (H-T-H motif). Residues 112–132 (WLMTFTWLVLFVVIGLSGAWW) traverse the membrane as a helical; Signal-anchor for type II membrane protein segment. Topologically, residues 133–337 (WQDHKAQQEE…TLNAEQSPAQ (205 aa)) are periplasmic. Residues 145-167 (TMADQSSAELSSNSEQGQSVPLN) are compositionally biased toward polar residues. The segment at 145–218 (TMADQSSAEL…AVVSPSQANV (74 aa)) is disordered. The span at 168 to 207 (TSTTTDPATTSTPPASVDTTATNTQTPAVTAPAPAVDPQQ) shows a compositional bias: low complexity. Residues 208 to 218 (NAVVSPSQANV) are compositionally biased toward polar residues.

Belongs to the RodZ family.

It localises to the cell inner membrane. Its function is as follows. Cytoskeletal protein that is involved in cell-shape control through regulation of the length of the long axis. The polypeptide is Cytoskeleton protein RodZ (Shigella flexneri serotype 5b (strain 8401)).